A 469-amino-acid chain; its full sequence is Interstitial collagenase (469 aa).

An N-terminal signal peptide occupies residues 1 to 19 (MFSLLLLLLLLCNTGSHGF). Positions 20-99 (PAATSETQEQ…PRCGVPDVAE (80 aa)) are cleaved as a propeptide — activation peptide. Ser57 is subject to Phosphoserine. The Cysteine switch signature appears at 90–97 (PRCGVPDV). Residue Cys92 participates in Zn(2+) binding. Asn120 is a glycosylation site (N-linked (GlcNAc...) asparagine). Residues Asp124 and Asp158 each contribute to the Ca(2+) site. His168 and Asp170 together coordinate Zn(2+). Residues Asp175, Gly176, Gly178, and Asn180 each contribute to the Ca(2+) site. Position 183 (His183) interacts with Zn(2+). Ca(2+)-binding residues include Gly190, Gly192, and Asp194. A Zn(2+)-binding site is contributed by His196. Residues Asp198, Glu199, and Glu201 each coordinate Ca(2+). Residue His218 coordinates Zn(2+). The active site involves Glu219. Zn(2+) is bound by residues His222 and His228. Residue Thr274 is modified to Phosphothreonine. 4 Hemopexin repeats span residues 275–324 (PQVC…WPQV), 325–371 (PNGL…FGFP), 374–422 (VKNI…FPGI), and 423–466 (GNKV…WFNC). A disulfide bridge links Cys278 with Cys466. Residues Asp285 and Gln329 each contribute to the Ca(2+) site. Tyr360 carries the phosphotyrosine; by PKDCC modification. 2 residues coordinate Ca(2+): Asp378 and Asp427.

This sequence belongs to the peptidase M10A family. It depends on Ca(2+) as a cofactor. Requires Zn(2+) as cofactor. Undergoes autolytic cleavage to produce a N-terminal fragment having reduced collagenolytic activity. In terms of processing, tyrosine phosphorylated in platelets by PKDCC/VLK.

The protein resides in the secreted. The protein localises to the extracellular space. Its subcellular location is the extracellular matrix. It carries out the reaction Cleavage of the triple helix of collagen at about three-quarters of the length of the molecule from the N-terminus, at 775-Gly-|-Ile-776 in the alpha1(I) chain. Cleaves synthetic substrates and alpha-macroglobulins at bonds where P1' is a hydrophobic residue.. Its activity is regulated as follows. Can be activated without removal of the activation peptide. Functionally, cleaves collagens of types I, II, and III at one site in the helical domain. Also cleaves collagens of types VII and X. This is Interstitial collagenase (MMP1) from Sus scrofa (Pig).